We begin with the raw amino-acid sequence, 189 residues long: CASP-like protein 1U2 (189 aa).

At 1 to 24 the chain is on the cytoplasmic side; sequence MFGSDDSGCHVMDDDVAPPANGSK. Residues 25–45 traverse the membrane as a helical segment; that stretch reads AVTLLLRLITLALALTSAVLM. Residues 46-71 lie on the Extracellular side of the membrane; the sequence is ATASECTIYGLDGATATTVTFKDYQP. The helical transmembrane segment at 72–92 threads the bilayer; sequence FIYLVGSNIAATILEVAAIYV. The Cytoplasmic segment spans residues 93-109; sequence QVGKGDDVEDAPMIPRV. The chain crosses the membrane as a helical span at residues 110–130; sequence VLVVVDVAVQMLLYSATGAVF. Over 131–158 the chain is Extracellular; that stretch reads AAVMAYGPQISACTGAAGHFCEQVQRSK. The helical transmembrane segment at 159 to 179 threads the bilayer; sequence IISLAASLSAVLAAVAKDVAL. Topologically, residues 180–189 are cytoplasmic; it reads PCSVWPHPSS.

Belongs to the Casparian strip membrane proteins (CASP) family. As to quaternary structure, homodimer and heterodimers.

The protein resides in the cell membrane. The chain is CASP-like protein 1U2 from Sorghum bicolor (Sorghum).